Here is a 766-residue protein sequence, read N- to C-terminus: Serine/threonine-protein kinase tousled-like 1 (766 aa).

Residues 1–198 (MSVQSSSGSL…PSPTALAFGD (198 aa)) form a disordered region. Over residues 20-33 (STSPTPGSAAAARS) the composition is skewed to low complexity. Threonine 38 is modified (phosphothreonine). The span at 43 to 64 (RPREGAMDELHSLDPRRQELLE) shows a compositional bias: basic and acidic residues. Phosphoserine is present on residues serine 54, serine 77, and serine 80. Low complexity predominate over residues 68–85 (TGVATGSTGSTGSCSVGA). The segment covering 87-103 (ASTNNESSNHSFGSLGS) has biased composition (polar residues). Over residues 105–121 (SDKESETPEKKQSESSR) the composition is skewed to basic and acidic residues. Residues serine 134, serine 159, serine 174, and serine 176 each carry the phosphoserine modification. A compositionally biased stretch (low complexity) spans 170-192 (SPQNSHSHSTPSSSVRPNSPSPT). Positions 229–280 (NQDLEKKEGRIDDLLRANCDLRRQIDDQQKLLEKYKERLNKCISMSKKLLIE) form a coiled coil. Residues 344–381 (KLLGKRKPPTANNSQAPATNSEAKQRKTKAVNGAENDP) form a disordered region. Over residues 353 to 365 (TANNSQAPATNSE) the composition is skewed to polar residues. Positions 397–445 (HEQEEIFKLRLGHLKKEEAEIQAELERLERVRNLHIRELKRINNEDNSQ) form a coiled coil. In terms of domain architecture, Protein kinase spans 456–734 (YLLLHLLGRG…VHQLANDPYL (279 aa)). Residues 462 to 470 (LGRGGFSEV) and lysine 485 contribute to the ATP site. Aspartate 586 (proton acceptor) is an active-site residue. Serine 743 carries the phosphoserine modification. Residues 745-766 (GNLHMSGLTATPTPPSSSIITY) form a disordered region.

Belongs to the protein kinase superfamily. Ser/Thr protein kinase family. In terms of assembly, heterodimer with TLK2. Mg(2+) serves as cofactor. As to expression, ubiquitously expressed in all tissues examined.

Its subcellular location is the nucleus. It carries out the reaction L-seryl-[protein] + ATP = O-phospho-L-seryl-[protein] + ADP + H(+). The enzyme catalyses L-threonyl-[protein] + ATP = O-phospho-L-threonyl-[protein] + ADP + H(+). Its activity is regulated as follows. Cell-cycle regulated, maximal activity in S-phase. Inactivated by phosphorylation at Ser-743, potentially by CHEK1. Functionally, rapidly and transiently inhibited by phosphorylation following the generation of DNA double-stranded breaks during S-phase. This is cell cycle checkpoint and ATM-pathway dependent and appears to regulate processes involved in chromatin assembly. Isoform 3 protects the cells from the ionizing radiation by facilitating the repair of DSBs. In vitro, phosphorylates histone H3 at 'Ser-10'. This chain is Serine/threonine-protein kinase tousled-like 1 (Tlk1), found in Mus musculus (Mouse).